The chain runs to 308 residues: Ornithine carbamoyltransferase (308 aa).

Carbamoyl phosphate is bound by residues 50–53 (STRT), Q77, R101, and 128–131 (HPCQ). L-ornithine contacts are provided by residues N160, D224, and 228–229 (SM). Carbamoyl phosphate-binding positions include 264 to 265 (CL) and R292.

The protein belongs to the aspartate/ornithine carbamoyltransferase superfamily. OTCase family.

It localises to the cytoplasm. It carries out the reaction carbamoyl phosphate + L-ornithine = L-citrulline + phosphate + H(+). Its pathway is amino-acid biosynthesis; L-arginine biosynthesis; L-arginine from L-ornithine and carbamoyl phosphate: step 1/3. Reversibly catalyzes the transfer of the carbamoyl group from carbamoyl phosphate (CP) to the N(epsilon) atom of ornithine (ORN) to produce L-citrulline. The chain is Ornithine carbamoyltransferase from Mycobacterium ulcerans (strain Agy99).